The sequence spans 396 residues: Elongation factor Tu (396 aa).

The tr-type G domain occupies 10 to 206 (KPHVNVGTIG…ALDTYIPTPE (197 aa)). Positions 19 to 26 (GHVDHGKT) are G1. 19-26 (GHVDHGKT) lines the GTP pocket. Thr26 serves as a coordination point for Mg(2+). A G2 region spans residues 60-64 (GITIN). Residues 81-84 (DCPG) form a G3 region. Residues 81 to 85 (DCPGH) and 136 to 139 (NKCD) each bind GTP. Residues 136–139 (NKCD) form a G4 region. The G5 stretch occupies residues 174-176 (SAK).

The protein belongs to the TRAFAC class translation factor GTPase superfamily. Classic translation factor GTPase family. EF-Tu/EF-1A subfamily. As to quaternary structure, monomer.

It localises to the cytoplasm. The enzyme catalyses GTP + H2O = GDP + phosphate + H(+). Its function is as follows. GTP hydrolase that promotes the GTP-dependent binding of aminoacyl-tRNA to the A-site of ribosomes during protein biosynthesis. This is Elongation factor Tu from Burkholderia vietnamiensis (strain G4 / LMG 22486) (Burkholderia cepacia (strain R1808)).